Reading from the N-terminus, the 31-residue chain is Cyclotide vibi-F (31 aa).

Residues 1–31 (GTIPCGESCVFIPCLTSALGCSCKSKVCYKN) constitute a cross-link (cyclopeptide (Gly-Asn)). 3 cysteine pairs are disulfide-bonded: C5/C21, C9/C23, and C14/C28.

In terms of processing, this is a cyclic peptide.

Probably participates in a plant defense mechanism. The sequence is that of Cyclotide vibi-F from Viola biflora (Yellow wood violet).